Reading from the N-terminus, the 331-residue chain is Tetraacyldisaccharide 4'-kinase (331 aa).

Position 58–65 (58–65 (TVGGSGKT)) interacts with ATP.

Belongs to the LpxK family.

The catalysed reaction is a lipid A disaccharide + ATP = a lipid IVA + ADP + H(+). The protein operates within glycolipid biosynthesis; lipid IV(A) biosynthesis; lipid IV(A) from (3R)-3-hydroxytetradecanoyl-[acyl-carrier-protein] and UDP-N-acetyl-alpha-D-glucosamine: step 6/6. Functionally, transfers the gamma-phosphate of ATP to the 4'-position of a tetraacyldisaccharide 1-phosphate intermediate (termed DS-1-P) to form tetraacyldisaccharide 1,4'-bis-phosphate (lipid IVA). This is Tetraacyldisaccharide 4'-kinase from Shewanella denitrificans (strain OS217 / ATCC BAA-1090 / DSM 15013).